A 683-amino-acid chain; its full sequence is Acetyl-coenzyme A synthetase 2 (683 aa).

Residues 207-210 (RGGK) and Thr326 contribute to the CoA site. Residues 402–404 (GEP), 426–431 (DTFWQT), Asp517, and Arg532 each bind ATP. Ser540 contributes to the CoA binding site. Arg543 is a binding site for ATP. Arg613 contributes to the CoA binding site.

This sequence belongs to the ATP-dependent AMP-binding enzyme family.

The catalysed reaction is acetate + ATP + CoA = acetyl-CoA + AMP + diphosphate. The sequence is that of Acetyl-coenzyme A synthetase 2 (ACS2) from Candida glabrata (strain ATCC 2001 / BCRC 20586 / JCM 3761 / NBRC 0622 / NRRL Y-65 / CBS 138) (Yeast).